The following is a 554-amino-acid chain: Dihydroxy-acid dehydratase (554 aa).

Cysteine 51 lines the [2Fe-2S] cluster pocket. Aspartate 83 contributes to the Mg(2+) binding site. A [2Fe-2S] cluster-binding site is contributed by cysteine 124. Mg(2+) contacts are provided by aspartate 125 and lysine 126. Lysine 126 carries the N6-carboxylysine modification. A [2Fe-2S] cluster-binding site is contributed by cysteine 193. Glutamate 444 is a binding site for Mg(2+). The Proton acceptor role is filled by serine 470.

The protein belongs to the IlvD/Edd family. As to quaternary structure, homodimer. The cofactor is [2Fe-2S] cluster. It depends on Mg(2+) as a cofactor.

It catalyses the reaction (2R)-2,3-dihydroxy-3-methylbutanoate = 3-methyl-2-oxobutanoate + H2O. The enzyme catalyses (2R,3R)-2,3-dihydroxy-3-methylpentanoate = (S)-3-methyl-2-oxopentanoate + H2O. The protein operates within amino-acid biosynthesis; L-isoleucine biosynthesis; L-isoleucine from 2-oxobutanoate: step 3/4. Its pathway is amino-acid biosynthesis; L-valine biosynthesis; L-valine from pyruvate: step 3/4. Its function is as follows. Functions in the biosynthesis of branched-chain amino acids. Catalyzes the dehydration of (2R,3R)-2,3-dihydroxy-3-methylpentanoate (2,3-dihydroxy-3-methylvalerate) into 2-oxo-3-methylpentanoate (2-oxo-3-methylvalerate) and of (2R)-2,3-dihydroxy-3-methylbutanoate (2,3-dihydroxyisovalerate) into 2-oxo-3-methylbutanoate (2-oxoisovalerate), the penultimate precursor to L-isoleucine and L-valine, respectively. This is Dihydroxy-acid dehydratase from Vesicomyosocius okutanii subsp. Calyptogena okutanii (strain HA).